A 1048-amino-acid polypeptide reads, in one-letter code: Calcium-transporting ATPase, endoplasmic reticulum-type (1048 aa).

Topologically, residues 1 to 63 (MEEKPFPAWS…WRLVLEQFDD (63 aa)) are cytoplasmic. The chain crosses the membrane as a helical span at residues 64 to 84 (TLVKILLGAAFISFVLAYVNQ). Over 85–93 (DETGESGFE) the chain is Lumenal. The helical transmembrane segment at 94-114 (AYVEPLVILWILVLNAIVGVW) threads the bilayer. At 115 to 213 (QESNAEKALE…DCELQAKENM (99 aa)) the chain is on the cytoplasmic side. Residues 214–234 (VFAGTTVVNGSCICIVVNTGM) traverse the membrane as a helical segment. Residues 235–267 (CTEIGKIQRQIHDASMEESDTPLKKKLDEFGNR) are Lumenal-facing. Residues 268–288 (LTFAIGVVCLVVWAINYKYFL) traverse the membrane as a helical segment. The Cytoplasmic portion of the chain corresponds to 289–312 (SWEVVDDWPSDFRFSFEKCAYYFK). The helical transmembrane segment at 313–333 (IAVALAVAAIPEGLPSVITTC) threads the bilayer. Ca(2+) is bound by residues V319, A320, I322, and E324. The Lumenal portion of the chain corresponds to 334–800 (LALGTRKMAQ…ISSNVGEVIS (467 aa)). The 4-aspartylphosphate intermediate role is filled by D366. Residues D728 and D732 each contribute to the Mg(2+) site. Positions 794 and 797 each coordinate Ca(2+). A helical membrane pass occupies residues 801–821 (IFLTAVLGIPECLIPVQLLWV). The Ca(2+) site is built by N822, T825, and D826. The Cytoplasmic segment spans residues 822-862 (NLVTDGPPATALGFNPADVDIMQKPPRKNTDALINSWVFFR). The helical transmembrane segment at 863–883 (YMVIGSYVGIATVGIFIVWYT) threads the bilayer. Residues 884 to 944 (QASFLGINIV…CEYFTVGKVK (61 aa)) lie on the Lumenal side of the membrane. Residues 945–965 (AMTLSLSVLVAIEMFNSLNAL) traverse the membrane as a helical segment. E957 is a Ca(2+) binding site. Residues 966–981 (SEDNSLIKMPPWRNPW) are Cytoplasmic-facing. A helical membrane pass occupies residues 982-1002 (LLVAMSLSFALHSVILYVPFL). At 1003–1007 (ADIFG) the chain is on the lumenal side. The chain crosses the membrane as a helical span at residues 1008–1028 (IVPLSLYEWLLVILLSAPVIL). The Cytoplasmic segment spans residues 1029–1048 (IDEVLKFVGRRRRRTKLKAA).

It belongs to the cation transport ATPase (P-type) (TC 3.A.3) family. Type IIA subfamily. 9-fold higher level in roots compared with leaves.

It is found in the endoplasmic reticulum membrane. The catalysed reaction is Ca(2+)(in) + ATP + H2O = Ca(2+)(out) + ADP + phosphate + H(+). Functionally, this magnesium-dependent enzyme catalyzes the hydrolysis of ATP coupled with the translocation of calcium from the cytosol to an endomembrane compartment. The protein is Calcium-transporting ATPase, endoplasmic reticulum-type of Solanum lycopersicum (Tomato).